The sequence spans 214 residues: Rhodanese-like domain-containing protein 10 (214 aa).

The Rhodanese domain occupies 58–182; it reads ASEGYILLDV…VSEGDFPEIE (125 aa). Catalysis depends on Cys142, which acts as the Cysteine persulfide intermediate. Residues 190 to 206 form a helical membrane-spanning segment; that stretch reads ATIGGVSFYLLKLLVLL.

It is found in the membrane. The chain is Rhodanese-like domain-containing protein 10 (STR10) from Arabidopsis thaliana (Mouse-ear cress).